Consider the following 532-residue polypeptide: Pentatricopeptide repeat-containing protein At4g02820, mitochondrial (532 aa).

The N-terminal 28 residues, 1–28 (MNKNMLVRSARPTLASIHRLFSAAAAAT), are a transit peptide targeting the mitochondrion. Residues 35-56 (PVVKPRSGGGKGGESANKKETV) form a disordered region. 10 PPR repeats span residues 161–195 (GHAA…GFLK), 196–226 (SCLP…LKIR), 230–264 (DIVT…KLNP), 265–295 (DWVT…MEKL), 300–330 (NRVA…VKSS), 335–365 (NDAE…WESV), 370–404 (DARI…GINP), 405–435 (SYST…AIDS), 442–472 (NVRL…LQKA), and 476–512 (NTQL…DEET).

The protein belongs to the PPR family. P subfamily.

The protein resides in the mitochondrion. The protein is Pentatricopeptide repeat-containing protein At4g02820, mitochondrial of Arabidopsis thaliana (Mouse-ear cress).